We begin with the raw amino-acid sequence, 472 residues long: UDP-glycosyltransferase 2 (472 aa).

UDP-alpha-D-glucose contacts are provided by residues Ser283, 348-349 (WA), 366-374 (HCGWNSVLE), and 388-391 (YAEQ).

Belongs to the UDP-glycosyltransferase family. As to expression, highly expressed in roots. Expressed in leaves and stems.

In terms of biological role, glycosyltransferase that possesses isoflavonoids 4'-O- and 7-O-glucosyltransferase activities. Shows a successive glucosylation toward the acceptors producing their corresponding 4',7-O-diglucosides. Can use genistein, formononetin, daidzein, liquiritigenin and naringenin as substrates. Also shows a 3'-O-glucosylation activity in vitro. This is UDP-glycosyltransferase 2 from Pueraria montana var. lobata (Kudzu vine).